Reading from the N-terminus, the 1345-residue chain is CRISPR-associated endonuclease Cas9 (1345 aa).

Aspartate 10 serves as the catalytic For RuvC-like nuclease domain. Mg(2+) contacts are provided by aspartate 10, glutamate 762, and glutamate 766. Positions 770 to 921 constitute an HNH Cas9-type domain; sequence TNQGRRNSQQ…DKAGFIKRQL (152 aa). Histidine 840 functions as the Proton acceptor for HNH nuclease domain in the catalytic mechanism. Histidine 983 is a binding site for Mg(2+).

It belongs to the CRISPR-associated protein Cas9 family. Subtype II-A subfamily. In terms of assembly, monomer. Binds crRNA and tracrRNA. Requires Mg(2+) as cofactor.

In terms of biological role, CRISPR (clustered regularly interspaced short palindromic repeat) is an adaptive immune system that provides protection against mobile genetic elements (viruses, transposable elements and conjugative plasmids). CRISPR clusters contain spacers, sequences complementary to antecedent mobile elements, and target invading nucleic acids. CRISPR clusters are transcribed and processed into CRISPR RNA (crRNA). In type II CRISPR systems correct processing of pre-crRNA requires a trans-encoded small RNA (tracrRNA), endogenous ribonuclease 3 (rnc) and this protein. The tracrRNA serves as a guide for ribonuclease 3-aided processing of pre-crRNA. Subsequently Cas9/crRNA/tracrRNA endonucleolytically cleaves linear or circular dsDNA target complementary to the spacer; Cas9 is inactive in the absence of the 2 guide RNAs (gRNA). Cas9 recognizes the protospacer adjacent motif (PAM) in the CRISPR repeat sequences to help distinguish self versus nonself, as targets within the bacterial CRISPR locus do not have PAMs. PAM recognition is also required for catalytic activity. Complements the gRNA coprocessing defect in a cas9 deletion in S.pyogenes strain 370 and cuts target plasmid in Cas9:gRNAs mixing experiments with S.thermophilus CRISPR3 from strain LMD-9. This is CRISPR-associated endonuclease Cas9 from Streptococcus mutans serotype c (strain ATCC 700610 / UA159).